Consider the following 301-residue polypeptide: Probable alpha-L-glutamate ligase (301 aa).

Residues 104–287 (LQFLSRKGID…IAGMIIEFIE (184 aa)) form the ATP-grasp domain. ATP is bound by residues Lys-141, 178-179 (EF), Asp-187, and 211-213 (RSN). Residues Asp-248, Glu-260, and Asn-262 each coordinate Mg(2+). Mn(2+) is bound by residues Asp-248, Glu-260, and Asn-262.

Belongs to the RimK family. Mg(2+) is required as a cofactor. Requires Mn(2+) as cofactor.

The protein is Probable alpha-L-glutamate ligase of Coxiella burnetii (strain CbuK_Q154) (Coxiella burnetii (strain Q154)).